The chain runs to 345 residues: Histidinol-phosphate aminotransferase (345 aa).

Lys-206 bears the N6-(pyridoxal phosphate)lysine mark.

This sequence belongs to the class-II pyridoxal-phosphate-dependent aminotransferase family. Histidinol-phosphate aminotransferase subfamily. Homodimer. Pyridoxal 5'-phosphate is required as a cofactor.

The catalysed reaction is L-histidinol phosphate + 2-oxoglutarate = 3-(imidazol-4-yl)-2-oxopropyl phosphate + L-glutamate. It functions in the pathway amino-acid biosynthesis; L-histidine biosynthesis; L-histidine from 5-phospho-alpha-D-ribose 1-diphosphate: step 7/9. This chain is Histidinol-phosphate aminotransferase, found in Bacteroides fragilis (strain YCH46).